Consider the following 367-residue polypeptide: Acryloyl-CoA reductase electron transfer subunit beta (367 aa).

305-333 (VYVALGISGAIQHKAGMQDSELIIAVNKD) serves as a coordination point for FAD.

As to quaternary structure, heterohexadecamer; tetramer of tetramers. Each tetramer is composed of 2 alpha (AcrC), a beta (AcrA) and a gamma (AcrB) subunit.

It localises to the cytoplasm. Its function is as follows. Part of the ETF-acryloyl-CoA reductase complex involved in the pathway of L-alanine fermentation. The electron transfer flavoprotein (ETF) serves as a specific electron acceptor for acryloyl-CoA reductase. The sequence is that of Acryloyl-CoA reductase electron transfer subunit beta (acrA) from Anaerotignum propionicum (Clostridium propionicum).